Here is a 79-residue protein sequence, read N- to C-terminus: Putative membrane protein insertion efficiency factor (79 aa).

The protein belongs to the UPF0161 family.

Its subcellular location is the cell inner membrane. Could be involved in insertion of integral membrane proteins into the membrane. The chain is Putative membrane protein insertion efficiency factor from Cytophaga hutchinsonii (strain ATCC 33406 / DSM 1761 / CIP 103989 / NBRC 15051 / NCIMB 9469 / D465).